We begin with the raw amino-acid sequence, 448 residues long: Methylenetetrahydrofolate--tRNA-(uracil-5-)-methyltransferase TrmFO (448 aa).

13 to 18 (GAGLAG) is an FAD binding site.

Belongs to the MnmG family. TrmFO subfamily. FAD is required as a cofactor.

The protein resides in the cytoplasm. It carries out the reaction uridine(54) in tRNA + (6R)-5,10-methylene-5,6,7,8-tetrahydrofolate + NADH + H(+) = 5-methyluridine(54) in tRNA + (6S)-5,6,7,8-tetrahydrofolate + NAD(+). The catalysed reaction is uridine(54) in tRNA + (6R)-5,10-methylene-5,6,7,8-tetrahydrofolate + NADPH + H(+) = 5-methyluridine(54) in tRNA + (6S)-5,6,7,8-tetrahydrofolate + NADP(+). Its function is as follows. Catalyzes the folate-dependent formation of 5-methyl-uridine at position 54 (M-5-U54) in all tRNAs. The sequence is that of Methylenetetrahydrofolate--tRNA-(uracil-5-)-methyltransferase TrmFO from Streptococcus pyogenes serotype M4 (strain MGAS10750).